Here is a 233-residue protein sequence, read N- to C-terminus: Zinc import ATP-binding protein ZnuC (233 aa).

Residues 6-222 (IEFRNVSKKF…SEFSNALSAL (217 aa)) enclose the ABC transporter domain. 38-45 (GPNGAGKT) contacts ATP.

It belongs to the ABC transporter superfamily. Zinc importer (TC 3.A.1.15.5) family. The complex is composed of two ATP-binding proteins (ZnuC), two transmembrane proteins (ZnuB) and a solute-binding protein (ZnuA).

The protein localises to the cell inner membrane. It catalyses the reaction Zn(2+)(out) + ATP(in) + H2O(in) = Zn(2+)(in) + ADP(in) + phosphate(in) + H(+)(in). Functionally, part of the ABC transporter complex ZnuABC involved in zinc import. Responsible for energy coupling to the transport system. The polypeptide is Zinc import ATP-binding protein ZnuC (Rickettsia conorii (strain ATCC VR-613 / Malish 7)).